Consider the following 427-residue polypeptide: 3-phosphoshikimate 1-carboxyvinyltransferase (427 aa).

Residues lysine 20, serine 21, and arginine 25 each contribute to the 3-phosphoshikimate site. Residue lysine 20 coordinates phosphoenolpyruvate. Phosphoenolpyruvate is bound by residues glycine 92 and arginine 120. 3-phosphoshikimate-binding residues include serine 166, glutamine 168, aspartate 312, and lysine 339. Phosphoenolpyruvate is bound at residue glutamine 168. Aspartate 312 serves as the catalytic Proton acceptor. The phosphoenolpyruvate site is built by arginine 343 and arginine 385.

Belongs to the EPSP synthase family. Monomer.

The protein localises to the cytoplasm. The enzyme catalyses 3-phosphoshikimate + phosphoenolpyruvate = 5-O-(1-carboxyvinyl)-3-phosphoshikimate + phosphate. Its pathway is metabolic intermediate biosynthesis; chorismate biosynthesis; chorismate from D-erythrose 4-phosphate and phosphoenolpyruvate: step 6/7. In terms of biological role, catalyzes the transfer of the enolpyruvyl moiety of phosphoenolpyruvate (PEP) to the 5-hydroxyl of shikimate-3-phosphate (S3P) to produce enolpyruvyl shikimate-3-phosphate and inorganic phosphate. This chain is 3-phosphoshikimate 1-carboxyvinyltransferase, found in Streptococcus pyogenes serotype M49 (strain NZ131).